The chain runs to 274 residues: Formamidopyrimidine-DNA glycosylase (274 aa).

The active-site Schiff-base intermediate with DNA is the Pro2. Glu3 (proton donor) is an active-site residue. Lys58 acts as the Proton donor; for beta-elimination activity in catalysis. Positions 91 and 110 each coordinate DNA. An FPG-type zinc finger spans residues Gln238–Arg272. Arg262 functions as the Proton donor; for delta-elimination activity in the catalytic mechanism.

The protein belongs to the FPG family. Monomer. Requires Zn(2+) as cofactor.

It carries out the reaction Hydrolysis of DNA containing ring-opened 7-methylguanine residues, releasing 2,6-diamino-4-hydroxy-5-(N-methyl)formamidopyrimidine.. The enzyme catalyses 2'-deoxyribonucleotide-(2'-deoxyribose 5'-phosphate)-2'-deoxyribonucleotide-DNA = a 3'-end 2'-deoxyribonucleotide-(2,3-dehydro-2,3-deoxyribose 5'-phosphate)-DNA + a 5'-end 5'-phospho-2'-deoxyribonucleoside-DNA + H(+). Involved in base excision repair of DNA damaged by oxidation or by mutagenic agents. Acts as a DNA glycosylase that recognizes and removes damaged bases. Has a preference for oxidized purines, such as 7,8-dihydro-8-oxoguanine (8-oxoG). Has AP (apurinic/apyrimidinic) lyase activity and introduces nicks in the DNA strand. Cleaves the DNA backbone by beta-delta elimination to generate a single-strand break at the site of the removed base with both 3'- and 5'-phosphates. This chain is Formamidopyrimidine-DNA glycosylase, found in Streptococcus pneumoniae serotype 4 (strain ATCC BAA-334 / TIGR4).